Consider the following 130-residue polypeptide: Small ribosomal subunit protein uS11 (130 aa).

Belongs to the universal ribosomal protein uS11 family. As to quaternary structure, part of the 30S ribosomal subunit. Interacts with proteins S7 and S18. Binds to IF-3.

Located on the platform of the 30S subunit, it bridges several disparate RNA helices of the 16S rRNA. Forms part of the Shine-Dalgarno cleft in the 70S ribosome. The sequence is that of Small ribosomal subunit protein uS11 from Teredinibacter turnerae (strain ATCC 39867 / T7901).